The sequence spans 345 residues: Phosphoribosylformylglycinamidine cyclo-ligase (345 aa).

This sequence belongs to the AIR synthase family.

The protein localises to the cytoplasm. It catalyses the reaction 2-formamido-N(1)-(5-O-phospho-beta-D-ribosyl)acetamidine + ATP = 5-amino-1-(5-phospho-beta-D-ribosyl)imidazole + ADP + phosphate + H(+). It participates in purine metabolism; IMP biosynthesis via de novo pathway; 5-amino-1-(5-phospho-D-ribosyl)imidazole from N(2)-formyl-N(1)-(5-phospho-D-ribosyl)glycinamide: step 2/2. In Shewanella sp. (strain MR-7), this protein is Phosphoribosylformylglycinamidine cyclo-ligase.